The primary structure comprises 411 residues: CinA-like protein (411 aa).

The protein belongs to the CinA family.

This Dictyoglomus thermophilum (strain ATCC 35947 / DSM 3960 / H-6-12) protein is CinA-like protein.